The following is a 20-amino-acid chain: Short cationic peptide-4d (20 aa).

A Glutamic acid 1-amide modification is found at E20.

As to expression, expressed by the venom gland.

The protein resides in the secreted. This is Short cationic peptide-4d from Cupiennius salei (American wandering spider).